Consider the following 89-residue polypeptide: Barrier-to-autointegration factor 1 (89 aa).

It belongs to the BAF family. As to quaternary structure, interacts with emr-1 and lem-2. Interacts with lem-4l, leading to decreased phosphorylation by VRK1 and promoting dephosphorylation by protein phosphatase 2A (PP2A). In terms of processing, phosphorylated by vrk-1. Phosphorylation by vrk-1 in mitosis is essential to achieve correct timing of recruitment of nuclear envelope components during nuclear envelope assembly. Dephosphorylated by protein phosphatase 2A (PP2A) following interaction with lem-4l during mitotic exit, leading to mitotic nuclear envelope reassembly.

It is found in the nucleus. DNA-binding protein which plays an essential role in nuclear envelope formation. Required for normal chromosome segregation during mitosis. Associates with the nuclear lamina via its interaction with LEM domain containing proteins emr-1 and lem-2. In association with lem-3, plays a role in radiation-induced DNA damage repair response. The polypeptide is Barrier-to-autointegration factor 1 (baf-1) (Caenorhabditis elegans).